The chain runs to 436 residues: Hydrolyase ccsE (436 aa).

Serine 249 functions as the Nucleophile in the catalytic mechanism.

Belongs to the AB hydrolase superfamily. FUS2 hydrolase family. As to quaternary structure, homodimer.

It participates in mycotoxin biosynthesis. Hydrolyase; part of the gene cluster that mediates the biosynthesis of a family of the mycotoxins cytochalasins E and K. The hybrid PKS-NRPS synthetase ccsA and the enoyl reductase ccsC are responsible for fusion of phenylalanine with an octaketide backbone and subsequent release of the stable tetramic acid precursor. The polyketide synthase module (PKS) of the PKS-NRPS ccsA is responsible for the synthesis of the octaketide backbone. The downstream nonribosomal peptide synthetase (NRPS) amidates the carboxyl end of the octaketide with a phenylalanine. A reductase-like domain (R) at the C-terminus catalyzes the reductive release of the polyketide-amino acid intermediate. Because ccsA lacks a designated enoylreductase (ER) domain, the required activity is provided the enoyl reductase ccsC. Upon formation of the 11-membered carbocycle-fused perhydroisoindolone intermediate, a number of oxidative steps are required to afford the final cytochalasin E and K, including two hydroxylations at C17 and C18, one alcohol oxidation at C17, one epoxidation at C6 and C7 and two Baeyer-Villiger oxidations. The oxidative modification at C17, C18 and the C6-C7 epoxidation are likely to be catalyzed by the two cytochrome P450 oxygenases ccsD and ccsG. CcsD may be responsible for the epoxidation of the C6-C7 double bond. CcsG may be responsible for the successive oxidative modifications at C17 and C18. The double Baeyer-Villiger oxidations of ketocytochalasin to precytochalasin and cytochalasin Z(16) are among the final steps leading to cytochalasin E and K and are catalyzed by ccsB. The first oxygen insertion step follows that of the classic BVMO mechanism, generating the ester precytochalasin. Release of precytochalasin into an aqueous environment can generate the shunt product iso-precytochalasin through spontaneous isomerization. Alternatively, precytochalasin can undergo further oxidation by ccsB to yield the in-line carbonate-containing cytochalasin Z(16). Cytochalasin Z(16) is a precursor to cytochalasin E and cytochalasin K, whereas iso-precytochalasin is a precursor to cytochalasin Z(17) and rosellichalasin. The hydrolyase ccsE may catalyze hydrolysis of epoxide bond in cytochalasin E to afford cytochalasin K. The function of ccsF has not been assigned but it may play a role in post-PKS-NRPS biosynthetic step, resistance or transport of cytochalasins and related PKS-NRPS products. The polypeptide is Hydrolyase ccsE (Aspergillus clavatus (strain ATCC 1007 / CBS 513.65 / DSM 816 / NCTC 3887 / NRRL 1 / QM 1276 / 107)).